Consider the following 292-residue polypeptide: E3 ubiquitin-protein ligase RNF144A (292 aa).

The interval 16–236 is TRIAD supradomain; it reads PLVSCKLCLG…YDKGPCRNKL (221 aa). Zn(2+) is bound by residues Cys20, Cys23, Cys43, Cys46, Cys111, Cys116, Cys135, Cys138, Cys143, Cys146, His151, Cys156, Cys185, and Cys188. The RING-type 1 zinc finger occupies 20–70; the sequence is CKLCLGEYPAEQMTTIAQCQCIFCTLCLKQYVELLIKEGLETAISCPDAAC. The IBR-type zinc-finger motif lies at 91–156; sequence QRYKKLQFER…KARWHPGQGC (66 aa). An RING-type 2; atypical zinc finger spans residues 185–214; the sequence is CPKCRVYIERDEGCAQMMCKNCKHAFCWYC. The active site involves Cys198. Residues Cys203, Cys206, Cys211, Cys214, His226, and Cys232 each coordinate Zn(2+). A helical transmembrane segment spans residues 250 to 270; the sequence is VVGIFAGFGLLLLVASPFLLL.

It belongs to the RBR family. RNF144 subfamily. Self-associates. Interacts with UBE2L3. In terms of processing, autoubiquitinated.

Its subcellular location is the cell membrane. It localises to the cytoplasmic vesicle membrane. It catalyses the reaction [E2 ubiquitin-conjugating enzyme]-S-ubiquitinyl-L-cysteine + [acceptor protein]-L-lysine = [E2 ubiquitin-conjugating enzyme]-L-cysteine + [acceptor protein]-N(6)-ubiquitinyl-L-lysine.. Its pathway is protein modification; protein ubiquitination. In terms of biological role, E3 ubiquitin-protein ligase which accepts ubiquitin from E2 ubiquitin-conjugating enzymes UBE2L3 and UBE2L6 in the form of a thioester and then directly transfers the ubiquitin to targeted substrates. Mediates the ubiquitination and degradation of the DNA damage kinase PRKDC during DNA damage. Positively regulates DNA virus or exogenous cytosolic DNA-triggered innate immune response by mediating STING1 ubiquitination and increasing its 'Lys-6'-linked ubiquitination and translocation from the endoplasmic reticulum to the Golgi leading to downstream signaling pathways. Plays a positive role in EGF-dependent cell proliferation by prolonging EGF/EGFR signaling during EGF stimulation through EGFR ubiquitination. Increases ERK activity independently of EGFR signaling by promoting polyubiquitination and subsequent degradation of VRK3 in the cytosol. The protein is E3 ubiquitin-protein ligase RNF144A (Rnf144a) of Mus musculus (Mouse).